Reading from the N-terminus, the 358-residue chain is Peptide chain release factor 1 (358 aa).

N5-methylglutamine is present on glutamine 233.

The protein belongs to the prokaryotic/mitochondrial release factor family. Post-translationally, methylated by PrmC. Methylation increases the termination efficiency of RF1.

Its subcellular location is the cytoplasm. Functionally, peptide chain release factor 1 directs the termination of translation in response to the peptide chain termination codons UAG and UAA. This chain is Peptide chain release factor 1, found in Listeria monocytogenes serotype 4b (strain CLIP80459).